The primary structure comprises 89 residues: Large ribosomal subunit protein bL27 (89 aa).

Residues Met1–Leu21 form a disordered region.

Belongs to the bacterial ribosomal protein bL27 family.

This Caulobacter vibrioides (strain NA1000 / CB15N) (Caulobacter crescentus) protein is Large ribosomal subunit protein bL27.